A 325-amino-acid chain; its full sequence is Tetraacyldisaccharide 4'-kinase (325 aa).

An ATP-binding site is contributed by 55-62 (TAGGNGKT).

It belongs to the LpxK family.

The enzyme catalyses a lipid A disaccharide + ATP = a lipid IVA + ADP + H(+). Its pathway is glycolipid biosynthesis; lipid IV(A) biosynthesis; lipid IV(A) from (3R)-3-hydroxytetradecanoyl-[acyl-carrier-protein] and UDP-N-acetyl-alpha-D-glucosamine: step 6/6. Transfers the gamma-phosphate of ATP to the 4'-position of a tetraacyldisaccharide 1-phosphate intermediate (termed DS-1-P) to form tetraacyldisaccharide 1,4'-bis-phosphate (lipid IVA). This is Tetraacyldisaccharide 4'-kinase from Salmonella heidelberg (strain SL476).